A 585-amino-acid polypeptide reads, in one-letter code: Serine/threonine-protein kinase PknI (585 aa).

Topologically, residues 1 to 349 are cytoplasmic; the sequence is MALASGVTFA…ASPTRRRPRR (349 aa). In terms of domain architecture, Protein kinase spans 12 to 252; the sequence is YTVVRMLGCS…SCREFADAMN (241 aa). ATP contacts are provided by residues 18-26 and lysine 41; that span reads LGCSAMGEV. 3 residues coordinate ADP: lysine 41, aspartate 90, and valine 92. The active-site Proton acceptor is the aspartate 137. The chain crosses the membrane as a helical span at residues 350-370; it reads ILVGAVAVLLLAGLFAVGIVI. The Extracellular segment spans residues 371–585; it reads GRKTNTTATE…PTTTAPGPGR (215 aa). The interval 546–585 is disordered; that stretch reads SGDLPPAVTVPDPATIPDTPDTTSTATLTPPTTTAPGPGR. Residues 554–585 show a composition bias toward low complexity; it reads TVPDPATIPDTPDTTSTATLTPPTTTAPGPGR.

This sequence belongs to the protein kinase superfamily. Ser/Thr protein kinase family. Requires Mn(2+) as cofactor. Autophosphorylated at serine and threonine residues.

The protein resides in the cytoplasm. It is found in the cell membrane. It carries out the reaction L-seryl-[protein] + ATP = O-phospho-L-seryl-[protein] + ADP + H(+). It catalyses the reaction L-threonyl-[protein] + ATP = O-phospho-L-threonyl-[protein] + ADP + H(+). In terms of biological role, plays an important role in slowing down the growth of mycobacteria within the infected host. This chain is Serine/threonine-protein kinase PknI (pknI), found in Mycobacterium bovis (strain ATCC BAA-935 / AF2122/97).